Consider the following 480-residue polypeptide: Adenosylmethionine-8-amino-7-oxononanoate aminotransferase (480 aa).

126-127 (GS) is a binding site for pyridoxal 5'-phosphate. Tyrosine 160 serves as a coordination point for substrate. Position 270 (aspartate 270) interacts with pyridoxal 5'-phosphate. Lysine 314 carries the post-translational modification N6-(pyridoxal phosphate)lysine. Residue glycine 350 coordinates substrate. Position 351-352 (351-352 (PT)) interacts with pyridoxal 5'-phosphate. Substrate is bound at residue arginine 441.

Belongs to the class-III pyridoxal-phosphate-dependent aminotransferase family. BioA subfamily. Pyridoxal 5'-phosphate serves as cofactor.

The catalysed reaction is (8S)-8-amino-7-oxononanoate + S-adenosyl-L-methionine = S-adenosyl-4-methylsulfanyl-2-oxobutanoate + (7R,8S)-7,8-diammoniononanoate. It functions in the pathway cofactor biosynthesis; biotin biosynthesis; 7,8-diaminononanoate from 8-amino-7-oxononanoate (SAM route): step 1/1. Its function is as follows. Catalyzes the transfer of the alpha-amino group from S-adenosyl-L-methionine (SAM) to 7-keto-8-aminopelargonic acid (KAPA) to form 7,8-diaminopelargonic acid (DAPA). It is the only aminotransferase known to utilize SAM as an amino donor. This is Adenosylmethionine-8-amino-7-oxononanoate aminotransferase from Saccharomyces cerevisiae (strain ATCC 204508 / S288c) (Baker's yeast).